Reading from the N-terminus, the 147-residue chain is MKKNVAVDEALKEILNKEGASTQEEICEKLSSLGIAMTQSSVSRWLRKVHAIKIPGEKGARYSLPTSIDESSVKGLVFSVRYNSSLIVIRTAPGSASWIASLIDNKFSESILGTLAGDDTIFVTPIAESTISFIAKDIENFLLVFSD.

Belongs to the ArgR family.

It is found in the cytoplasm. Its pathway is amino-acid biosynthesis; L-arginine biosynthesis [regulation]. Functionally, regulates arginine biosynthesis genes. The sequence is that of Arginine repressor from Chlamydia felis (strain Fe/C-56) (Chlamydophila felis).